A 416-amino-acid polypeptide reads, in one-letter code: Adenylosuccinate synthetase (416 aa).

GTP is bound by residues 13–19 (GDEGKGK) and 41–43 (GHT). Catalysis depends on D14, which acts as the Proton acceptor. The Mg(2+) site is built by D14 and G41. IMP is bound by residues 14-17 (DEGK), 39-42 (NAGH), T126, R140, Q220, T235, and R299. Catalysis depends on H42, which acts as the Proton donor. Position 295–301 (295–301 (VSTGRKR)) interacts with substrate. GTP contacts are provided by residues R301, 327–329 (KLD), and 405–407 (STS).

The protein belongs to the adenylosuccinate synthetase family. Homodimer. Mg(2+) is required as a cofactor.

Its subcellular location is the cytoplasm. The enzyme catalyses IMP + L-aspartate + GTP = N(6)-(1,2-dicarboxyethyl)-AMP + GDP + phosphate + 2 H(+). It participates in purine metabolism; AMP biosynthesis via de novo pathway; AMP from IMP: step 1/2. Functionally, plays an important role in the de novo pathway of purine nucleotide biosynthesis. Catalyzes the first committed step in the biosynthesis of AMP from IMP. This is Adenylosuccinate synthetase from Campylobacter jejuni subsp. jejuni serotype O:6 (strain 81116 / NCTC 11828).